The primary structure comprises 311 residues: GTPase Era (311 aa).

The 168-residue stretch at 18–185 (RSGFVALIGA…AKYLAESVPN (168 aa)) folds into the Era-type G domain. Positions 26 to 33 (GAPNAGKS) are G1. 26-33 (GAPNAGKS) contacts GTP. Residues 52-56 (QTTRA) are G2. Residues 73–76 (DTPG) form a G3 region. GTP-binding positions include 73 to 77 (DTPGI) and 135 to 138 (NKVD). Positions 135–138 (NKVD) are G4. The tract at residues 164–166 (ISA) is G5. Residues 216 to 293 (LHEELPYAST…HLFLFVKVRE (78 aa)) enclose the KH type-2 domain.

This sequence belongs to the TRAFAC class TrmE-Era-EngA-EngB-Septin-like GTPase superfamily. Era GTPase family. Monomer.

It localises to the cytoplasm. It is found in the cell inner membrane. Its function is as follows. An essential GTPase that binds both GDP and GTP, with rapid nucleotide exchange. Plays a role in 16S rRNA processing and 30S ribosomal subunit biogenesis and possibly also in cell cycle regulation and energy metabolism. This is GTPase Era from Brucella suis biovar 1 (strain 1330).